The primary structure comprises 274 residues: Coiled-coil domain-containing protein 28A (274 aa).

The tract at residues Val121–His166 is disordered. The segment covering Ser122–Arg138 has biased composition (polar residues). Residues Lys234–Ala263 adopt a coiled-coil conformation.

The polypeptide is Coiled-coil domain-containing protein 28A (CCDC28A) (Homo sapiens (Human)).